We begin with the raw amino-acid sequence, 892 residues long: Alanine--tRNA ligase (892 aa).

Positions 565, 569, 678, and 682 each coordinate Zn(2+). A disordered region spans residues Gly-857–Ala-876.

Belongs to the class-II aminoacyl-tRNA synthetase family. Requires Zn(2+) as cofactor.

It is found in the cytoplasm. It carries out the reaction tRNA(Ala) + L-alanine + ATP = L-alanyl-tRNA(Ala) + AMP + diphosphate. In terms of biological role, catalyzes the attachment of alanine to tRNA(Ala) in a two-step reaction: alanine is first activated by ATP to form Ala-AMP and then transferred to the acceptor end of tRNA(Ala). Also edits incorrectly charged Ser-tRNA(Ala) and Gly-tRNA(Ala) via its editing domain. This chain is Alanine--tRNA ligase, found in Bradyrhizobium diazoefficiens (strain JCM 10833 / BCRC 13528 / IAM 13628 / NBRC 14792 / USDA 110).